The sequence spans 97 residues: Small ribosomal subunit protein bS20 (97 aa).

The protein belongs to the bacterial ribosomal protein bS20 family.

In terms of biological role, binds directly to 16S ribosomal RNA. The sequence is that of Small ribosomal subunit protein bS20 from Prochlorococcus marinus (strain AS9601).